A 485-amino-acid chain; its full sequence is Lysine--tRNA ligase (485 aa).

E391 and E398 together coordinate Mg(2+).

Belongs to the class-II aminoacyl-tRNA synthetase family. In terms of assembly, homodimer. It depends on Mg(2+) as a cofactor.

The protein localises to the cytoplasm. The enzyme catalyses tRNA(Lys) + L-lysine + ATP = L-lysyl-tRNA(Lys) + AMP + diphosphate. The sequence is that of Lysine--tRNA ligase from Blochmanniella floridana.